Consider the following 88-residue polypeptide: Large ribosomal subunit protein eL37A (88 aa).

Residues Cys-19, Cys-22, Cys-34, and Cys-37 each coordinate Zn(2+). The C4-type zinc-finger motif lies at 19–37 (CNRCGRRSFHVQKKTCSSC).

This sequence belongs to the eukaryotic ribosomal protein eL37 family. Component of the large ribosomal subunit (LSU). Mature yeast ribosomes consist of a small (40S) and a large (60S) subunit. The 40S small subunit contains 1 molecule of ribosomal RNA (18S rRNA) and 33 different proteins (encoded by 57 genes). The large 60S subunit contains 3 rRNA molecules (25S, 5.8S and 5S rRNA) and 46 different proteins (encoded by 81 genes). Zn(2+) serves as cofactor.

Its subcellular location is the cytoplasm. In terms of biological role, component of the ribosome, a large ribonucleoprotein complex responsible for the synthesis of proteins in the cell. The small ribosomal subunit (SSU) binds messenger RNAs (mRNAs) and translates the encoded message by selecting cognate aminoacyl-transfer RNA (tRNA) molecules. The large subunit (LSU) contains the ribosomal catalytic site termed the peptidyl transferase center (PTC), which catalyzes the formation of peptide bonds, thereby polymerizing the amino acids delivered by tRNAs into a polypeptide chain. The nascent polypeptides leave the ribosome through a tunnel in the LSU and interact with protein factors that function in enzymatic processing, targeting, and the membrane insertion of nascent chains at the exit of the ribosomal tunnel. In Saccharomyces cerevisiae (strain ATCC 204508 / S288c) (Baker's yeast), this protein is Large ribosomal subunit protein eL37A.